A 221-amino-acid polypeptide reads, in one-letter code: Glutathione peroxidase 6 (221 aa).

An N-terminal signal peptide occupies residues 1-19 (MTQQFWGPCLFSLFMAVLA). Cysteine 73 is an active-site residue.

It belongs to the glutathione peroxidase family. As to expression, expressed in the Bowman glands.

It is found in the secreted. The catalysed reaction is 2 glutathione + H2O2 = glutathione disulfide + 2 H2O. The chain is Glutathione peroxidase 6 (Gpx6) from Rattus norvegicus (Rat).